The following is a 96-amino-acid chain: uncharacterized protein (96 aa).

Residues 53 to 71 (VLLMPLLQSFVLSLALMGV) form a helical membrane-spanning segment.

The protein resides in the membrane. This is an uncharacterized protein from Saccharomyces cerevisiae (strain ATCC 204508 / S288c) (Baker's yeast).